A 222-amino-acid chain; its full sequence is uncharacterized protein (222 aa).

A coiled-coil region spans residues 43-73 (SQNEEFEYEMERMLSILNEQTMDLTQLQSRI).

This is an uncharacterized protein from Rickettsia conorii (strain ATCC VR-613 / Malish 7).